A 234-amino-acid chain; its full sequence is KNMITGAAQMDGAILVVSGADGPMPQTKEHILLAKQVGVPHIVVFLNKQDQVDDDELLELVELEVRELLDKYEFPGDEIPVVPGTALLALEALIANPKTQRGENKWVDKIYELMDKVDSYIPTPERETDKPFLLAVEDVLSITGRGTVATGRVERGTLKISDNVEIVGLKPTQTAVVTGLEMFKTLDETIAGDNVGVLLRGVQKKDIERGMVIAKPGTITPHTKFEAQVYVLTK.

The tr-type G domain occupies 1-125; the sequence is KNMITGAAQM…KVDSYIPTPE (125 aa). Position 47-50 (47-50) interacts with GTP; that stretch reads NKQD.

It belongs to the TRAFAC class translation factor GTPase superfamily. Classic translation factor GTPase family. EF-Tu/EF-1A subfamily.

Its subcellular location is the plastid. It is found in the chloroplast. It catalyses the reaction GTP + H2O = GDP + phosphate + H(+). In terms of biological role, GTP hydrolase that promotes the GTP-dependent binding of aminoacyl-tRNA to the A-site of ribosomes during protein biosynthesis. This is Elongation factor Tu, chloroplastic (tufA) from Pandorina morum (Freshwater green alga).